Consider the following 329-residue polypeptide: Malate dehydrogenase (329 aa).

An NAD(+)-binding site is contributed by 12–18; sequence GAAGQIG. Substrate is bound by residues R93 and R99. NAD(+) is bound by residues N106, Q113, and 130-132; that span reads VGN. N132 and R163 together coordinate substrate. Catalysis depends on H188, which acts as the Proton acceptor.

This sequence belongs to the LDH/MDH superfamily. MDH type 2 family.

The enzyme catalyses (S)-malate + NAD(+) = oxaloacetate + NADH + H(+). Functionally, catalyzes the reversible oxidation of malate to oxaloacetate. The polypeptide is Malate dehydrogenase (Streptomyces griseus subsp. griseus (strain JCM 4626 / CBS 651.72 / NBRC 13350 / KCC S-0626 / ISP 5235)).